The sequence spans 417 residues: Serine/threonine-protein phosphatase 4 regulatory subunit 2 (417 aa).

Composition is skewed to polar residues over residues 140–149, 158–170, and 186–196; these read EKNNSNSLNR, NSPS…NING, and APMTTNGLPES. Residues 140–417 form a disordered region; it reads EKNNSNSLNR…EVTDEPMEQD (278 aa). Ser159 carries the phosphoserine modification. Over residues 197–213 the composition is skewed to basic and acidic residues; sequence TDSKEANLQQNEEKNHS. The segment covering 214 to 226 has biased composition (low complexity); it reads DSSTSESEVSSVS. Residue Ser226 is modified to Phosphoserine. Residues 231 to 258 are compositionally biased toward basic and acidic residues; sequence KHPDEDAVEAEGHEVKRLRFDKEGEVRE. Residues 259–269 are compositionally biased toward polar residues; the sequence is TASQTTSSEIS. Basic and acidic residues predominate over residues 283-297; that stretch reads QDKDKDSRCTRQHCT. A compositionally biased stretch (acidic residues) spans 298 to 311; sequence EEDEEEDEEEEEES. Positions 318 to 327 are enriched in basic and acidic residues; sequence MIPERKNQEK. A compositionally biased stretch (acidic residues) spans 338-350; the sequence is ETSEENNQMEESD. Residues 353 to 363 show a composition bias toward basic and acidic residues; sequence QAEKDLLHSEG. Residues 366–375 are compositionally biased toward low complexity; it reads NEGPVSSSSS. A compositionally biased stretch (polar residues) spans 385–399; it reads GSNSSKTGEILSESS. A compositionally biased stretch (acidic residues) spans 400–417; sequence MENDDEATEVTDEPMEQD.

This sequence belongs to the PPP4R2 family. As to quaternary structure, serine/threonine-protein phosphatase 4 (PP4) occurs in different assemblies of the catalytic and one or more regulatory subunits. Component of the PP4 complexes PPP4C-PPP4R2, PPP4C-PPP4R2-PPP4R3A and PPP4C-PPP4R2-PPP4R3B. The PPP4C-PPP4R2 complex appears to be a tetramer composed of 2 molecules of PPP4C and 2 molecules of PPP4R2. Interacts with DDX20/GEMIN3 and GEMIN4. Interacts with RPA2; this DNA damage-dependent interaction recruits PPP4C leading to RPA2 dephosphorylation. Widely expressed.

It localises to the cytoplasm. It is found in the cytoskeleton. Its subcellular location is the microtubule organizing center. The protein localises to the centrosome. The protein resides in the nucleus. Functionally, regulatory subunit of serine/threonine-protein phosphatase 4 (PP4). May regulate the activity of PPP4C at centrosomal microtubule organizing centers. Its interaction with the SMN complex leads to enhance the temporal localization of snRNPs, suggesting a role of PPP4C in maturation of spliceosomal snRNPs. The PPP4C-PPP4R2-PPP4R3A PP4 complex specifically dephosphorylates H2AX phosphorylated on 'Ser-140' (gamma-H2AX) generated during DNA replication and required for DNA double strand break repair. Mediates RPA2 dephosphorylation by recruiting PPP4C to RPA2 in a DNA damage-dependent manner. RPA2 dephosphorylation is required for the efficient RPA2-mediated recruitment of RAD51 to chromatin following double strand breaks, an essential step for DNA repair. This Homo sapiens (Human) protein is Serine/threonine-protein phosphatase 4 regulatory subunit 2 (PPP4R2).